We begin with the raw amino-acid sequence, 375 residues long: E3 ubiquitin-protein ligase RHF2A (375 aa).

The RING-type; atypical zinc finger occupies 33 to 74; that stretch reads CSICLESFCESDPSTLTSCKHEYHLQCILEWCQRSSQCPMCW. A compositionally biased stretch (basic residues) spans 146 to 159; the sequence is RARHGVRREGHRSR. Disordered regions lie at residues 146–165, 172–262, and 318–375; these read RARH…SQGH, SSQP…SESL, and ERLE…SGSS. A compositionally biased stretch (pro residues) spans 178-188; that stretch reads SSPPPHPPMPS. Polar residues-rich tracts occupy residues 211–245 and 327–336; these read SHQS…SSPS and RPSTASVSDV. Residues 337 to 365 are compositionally biased toward basic and acidic residues; the sequence is SENHTPETNNEHNRAAAGDEHSVNERGVK.

The enzyme catalyses S-ubiquitinyl-[E2 ubiquitin-conjugating enzyme]-L-cysteine + [acceptor protein]-L-lysine = [E2 ubiquitin-conjugating enzyme]-L-cysteine + N(6)-ubiquitinyl-[acceptor protein]-L-lysine.. It participates in protein modification; protein ubiquitination. Its function is as follows. E3 ubiquitin-protein ligase involved in the positive regulation of the gametogenesis progression. Required for the degradation of KRP6, a cyclin-dependent kinase inhibitor which accumulates during meiosis and blocks the progression of subsequent mitoses during gametophytes development. Functions in association with RHF1A. In Arabidopsis thaliana (Mouse-ear cress), this protein is E3 ubiquitin-protein ligase RHF2A.